The primary structure comprises 1342 residues: DNA-directed RNA polymerase subunit beta (1342 aa).

Belongs to the RNA polymerase beta chain family. The RNAP catalytic core consists of 2 alpha, 1 beta, 1 beta' and 1 omega subunit. When a sigma factor is associated with the core the holoenzyme is formed, which can initiate transcription.

The catalysed reaction is RNA(n) + a ribonucleoside 5'-triphosphate = RNA(n+1) + diphosphate. Its function is as follows. DNA-dependent RNA polymerase catalyzes the transcription of DNA into RNA using the four ribonucleoside triphosphates as substrates. The chain is DNA-directed RNA polymerase subunit beta from Klebsiella pneumoniae subsp. pneumoniae (strain ATCC 700721 / MGH 78578).